Here is a 503-residue protein sequence, read N- to C-terminus: Probable dolichyl pyrophosphate Man9GlcNAc2 alpha-1,3-glucosyltransferase (503 aa).

Residues 1–46 (MKERIKDKAWRPQFIKLNNPDTSKKIVSQKSKKPEIVDLSSPGNND) lie on the Cytoplasmic side of the membrane. The chain crosses the membrane as a helical span at residues 47 to 67 (LVTISILCVLLCFQLAISLNP). Residues 68-151 (HSGESQPPMY…SRGYESIAHK (84 aa)) are Lumenal-facing. A helical transmembrane segment spans residues 152 to 172 (LFMRLSAIIPFYIFYLPPLIF). Residues 173–181 (YFTRSKKMS) lie on the Cytoplasmic side of the membrane. Residues 182–202 (PILYALALLYPSLLVIDNGHF) traverse the membrane as a helical segment. Residues 203-211 (QYNSISLGL) lie on the Lumenal side of the membrane. Residues 212-232 (FLATYMFLTKNFTIIGSILFV) form a helical membrane-spanning segment. Residues 233–239 (AALNYKQ) lie on the Cytoplasmic side of the membrane. Residues 240-257 (MELYHALPVFVFILARSI) traverse the membrane as a helical segment. Residues 258-268 (NKTQLFNSFRR) are Lumenal-facing. A helical transmembrane segment spans residues 269-289 (ILTIGLFVVGTFLIIWLPFLL). Residues 290–332 (TGTAKDVIIRVFPFNRGLYEDKVASFWCAFSFILKRLPLQSVQ) lie on the Cytoplasmic side of the membrane. Residues 333-353 (IYISTALVLAGSAPSLLVLFL) traverse the membrane as a helical segment. Residues 354–359 (RPTEKQ) lie on the Lumenal side of the membrane. A helical transmembrane segment spans residues 360-379 (FRISLTATGLSFFLFSFHVH). Over 380–382 (EKT) the chain is Cytoplasmic. A helical membrane pass occupies residues 383-403 (ILLAAVPALLLISEYTSLVIW). The Lumenal segment spans residues 404–420 (FLNITNISIFSLCVKDN). A helical membrane pass occupies residues 421–441 (FALSLSFFFAYFVVSYAYTAP). At 442–443 (RK) the chain is on the cytoplasmic side. The helical transmembrane segment at 444–464 (ISHILTILIGFAICILELYGP) threads the bilayer. Over 465 to 474 (SNQRFPHIYQ) the chain is Lumenal. The helical transmembrane segment at 475–495 (LANAFFSCVHFIYFLLYLSFA) threads the bilayer. Residues 496-503 (SFEKTKKE) are Cytoplasmic-facing.

The protein belongs to the ALG6/ALG8 glucosyltransferase family.

It is found in the endoplasmic reticulum membrane. The enzyme catalyses an alpha-D-Man-(1-&gt;2)-alpha-D-Man-(1-&gt;2)-alpha-D-Man-(1-&gt;3)-[alpha-D-Man-(1-&gt;2)-alpha-D-Man-(1-&gt;3)-[alpha-D-Man-(1-&gt;2)-alpha-D-Man-(1-&gt;6)]-alpha-D-Man-(1-&gt;6)]-beta-D-Man-(1-&gt;4)-beta-D-GlcNAc-(1-&gt;4)-alpha-D-GlcNAc-diphospho-di-trans,poly-cis-dolichol + a di-trans,poly-cis-dolichyl beta-D-glucosyl phosphate = an alpha-D-Glc-(1-&gt;3)-alpha-D-Man-(1-&gt;2)-alpha-D-Man-(1-&gt;2)-alpha-D-Man-(1-&gt;3)-[alpha-D-Man-(1-&gt;2)-alpha-D-Man-(1-&gt;3)-[alpha-D-Man-(1-&gt;2)-alpha-D-Man-(1-&gt;6)]-alpha-D-Man-(1-&gt;6)]-beta-D-Man-(1-&gt;4)-beta-D-GlcNAc-(1-&gt;4)-alpha-D-GlcNAc-diphospho-di-trans,poly-cis-dolichol + a di-trans,poly-cis-dolichyl phosphate + H(+). The protein operates within protein modification; protein glycosylation. Its function is as follows. Adds the first glucose residue to the lipid-linked oligosaccharide precursor for N-linked glycosylation. Transfers glucose from dolichyl phosphate glucose (Dol-P-Glc) onto the lipid-linked oligosaccharide Man(9)GlcNAc(2)-PP-Dol. The chain is Probable dolichyl pyrophosphate Man9GlcNAc2 alpha-1,3-glucosyltransferase from Caenorhabditis elegans.